The following is a 1259-amino-acid chain: Clustered mitochondria protein homolog (1259 aa).

Residues Met-1–Asn-27 are compositionally biased toward polar residues. Residues Met-1 to Asn-38 are disordered. The region spanning Asp-324–Gln-568 is the Clu domain. Basic and acidic residues-rich tracts occupy residues Ala-612 to Gln-628 and Thr-634 to Val-647. Disordered stretches follow at residues Ala-612 to Val-647 and Val-881 to Ala-908. 3 TPR repeats span residues Ala-982–Thr-1015, Ile-1024–Ile-1057, and Ile-1066–Leu-1099. 2 disordered regions span residues Thr-1192 to Ser-1215 and Glu-1229 to Ala-1259.

This sequence belongs to the CLU family. May associate with the eukaryotic translation initiation factor 3 (eIF-3) complex.

Its subcellular location is the cytoplasm. In terms of biological role, mRNA-binding protein involved in proper cytoplasmic distribution of mitochondria. The chain is Clustered mitochondria protein homolog from Aspergillus clavatus (strain ATCC 1007 / CBS 513.65 / DSM 816 / NCTC 3887 / NRRL 1 / QM 1276 / 107).